The chain runs to 425 residues: Enolase (425 aa).

Gln163 contacts (2R)-2-phosphoglycerate. Glu205 acts as the Proton donor in catalysis. Residues Asp242, Glu285, and Asp312 each coordinate Mg(2+). The (2R)-2-phosphoglycerate site is built by Lys337, Arg366, Ser367, and Lys388. Lys337 acts as the Proton acceptor in catalysis.

The protein belongs to the enolase family. It depends on Mg(2+) as a cofactor.

It localises to the cytoplasm. The protein resides in the secreted. It is found in the cell surface. The catalysed reaction is (2R)-2-phosphoglycerate = phosphoenolpyruvate + H2O. Its pathway is carbohydrate degradation; glycolysis; pyruvate from D-glyceraldehyde 3-phosphate: step 4/5. Its function is as follows. Catalyzes the reversible conversion of 2-phosphoglycerate (2-PG) into phosphoenolpyruvate (PEP). It is essential for the degradation of carbohydrates via glycolysis. The sequence is that of Enolase from Ruegeria sp. (strain TM1040) (Silicibacter sp.).